The chain runs to 198 residues: Glycerol-3-phosphate acyltransferase (198 aa).

5 consecutive transmembrane segments (helical) span residues 10–30 (LIPI…WILV), 57–77 (GISF…ILIL), 86–106 (IMYL…WFLF), 118–138 (VVLS…AVVF), and 160–180 (AVTE…IVLI).

Belongs to the PlsY family. Probably interacts with PlsX.

The protein resides in the cell inner membrane. The enzyme catalyses an acyl phosphate + sn-glycerol 3-phosphate = a 1-acyl-sn-glycero-3-phosphate + phosphate. It participates in lipid metabolism; phospholipid metabolism. In terms of biological role, catalyzes the transfer of an acyl group from acyl-phosphate (acyl-PO(4)) to glycerol-3-phosphate (G3P) to form lysophosphatidic acid (LPA). This enzyme utilizes acyl-phosphate as fatty acyl donor, but not acyl-CoA or acyl-ACP. The chain is Glycerol-3-phosphate acyltransferase from Anaplasma marginale (strain Florida).